A 295-amino-acid polypeptide reads, in one-letter code: Iron-sulfur cluster carrier protein (295 aa).

Residue 38–45 participates in ATP binding; that stretch reads GKGGVGKS.

It belongs to the Mrp/NBP35 ATP-binding proteins family. Homodimer.

Binds and transfers iron-sulfur (Fe-S) clusters to target apoproteins. Can hydrolyze ATP. The sequence is that of Iron-sulfur cluster carrier protein from Pyrococcus abyssi (strain GE5 / Orsay).